The primary structure comprises 315 residues: MDALLKEIEKLSQPSLQKENNDVCDLCFMQMKKISNYQLLCEECGQLKDWFEPEYNEKFTVYSRLKIVGANSSYHQRDLDKANSSDYSSLQFHHILEELKSLNVKYMDAGQKPFPIQVLKETAHSYNQVQQHRVIRSITKLQILASILRSICLKLNIACTVADAARFTQLNTKGISRGMDLLRSLFVDNKITLNVDLNPIDSFINSTYSALQIKQIHQELQEENVYNLKEIVKSFILYADEKNIGVDLNRRTVVIATMYNVLRRAYYPIEIDTVVYQCKIRKNTITRALKMYEDYYSHFKSLYEQYHLNAAKKLI.

The protein belongs to the asfivirus C315R family.

Functionally, putative initation factor. The sequence is that of Initiation factor TFIIB homolog from African swine fever virus (strain Badajoz 1971 Vero-adapted) (Ba71V).